A 574-amino-acid polypeptide reads, in one-letter code: MAHRILTLILLFCSAHASASLFGQQNASQFVPADQAFAFDFQQQQHQLTLNWQIKPGYYLYRQQIRVTPANASVAPPALPTGEPHEDEFFGKSEIYRDALSVPVTVEQAAPGATLSVTYQGCAEAGFCYPPETRTVPLSAVEPTESVKANAATPSAATGEQTRVNSDSPSATLPFSAFWALLIGIGVAFTPCVLPMYPLISGIVLGGDKRLSTRRALLLAFIYVQGMALTYTALGLVVAAAGLQFQAALQSPWVLVTLSAVFVLLALSMFGLFTLQLPASLQTRLTLMSNRQRGGSPGGVFAMGAIAGLICSPCTTAPLSAILLYIAQSGNLWLGGGTLYLYALGMGLPLILVTVFGNRLLPKSGPWMEQVKTAFGFVILALPVFLLERVLGEPWGVRLWSVLGVAFFGWAFVTSLNATRSWMRAVQIVLLGAAMICARPLQDWVFGAPVAESQAHLAFTRIATVDDLDRALAQAKGKPVMLDLYADWCVACKEFEKYTFSAPEVQRALDGAVLLQADVTANSAADVALLKRLNVLGLPTIIFFDAQGNEIPNGRVTGFMDAPAFATHLHNRLR.

Positions 1–19 (MAHRILTLILLFCSAHASA) are cleaved as a signal peptide. Cys122 and Cys128 are oxidised to a cystine. The disordered stretch occupies residues 147–169 (VKANAATPSAATGEQTRVNSDSP). Polar residues predominate over residues 152-169 (ATPSAATGEQTRVNSDSP). Transmembrane regions (helical) follow at residues 173 to 193 (LPFSAFWALLIGIGVAFTPCV), 218 to 238 (LLAFIYVQGMALTYTALGLVV), 253 to 273 (WVLVTLSAVFVLLALSMFGLF), 306 to 326 (IAGLICSPCTTAPLSAILLYI), 333 to 353 (WLGGGTLYLYALGMGLPLILV), 367 to 387 (WMEQVKTAFGFVILALPVFLL), and 399 to 419 (LWSVLGVAFFGWAFVTSLNAT). Residues Cys192 and Cys314 are joined by a disulfide bond. Positions 430–574 (LLGAAMICAR…FATHLHNRLR (145 aa)) constitute a Thioredoxin domain. The cysteines at positions 489 and 492 are disulfide-linked.

Belongs to the thioredoxin family. DsbD subfamily.

It is found in the cell inner membrane. The enzyme catalyses [protein]-dithiol + NAD(+) = [protein]-disulfide + NADH + H(+). It catalyses the reaction [protein]-dithiol + NADP(+) = [protein]-disulfide + NADPH + H(+). Required to facilitate the formation of correct disulfide bonds in some periplasmic proteins and for the assembly of the periplasmic c-type cytochromes. Acts by transferring electrons from cytoplasmic thioredoxin to the periplasm. This transfer involves a cascade of disulfide bond formation and reduction steps. This is Thiol:disulfide interchange protein DsbD from Cronobacter sakazakii (strain ATCC BAA-894) (Enterobacter sakazakii).